Reading from the N-terminus, the 311-residue chain is Porphobilinogen deaminase (311 aa).

Cys242 carries the post-translational modification S-(dipyrrolylmethanemethyl)cysteine.

This sequence belongs to the HMBS family. In terms of assembly, monomer. Requires dipyrromethane as cofactor.

It carries out the reaction 4 porphobilinogen + H2O = hydroxymethylbilane + 4 NH4(+). It functions in the pathway porphyrin-containing compound metabolism; protoporphyrin-IX biosynthesis; coproporphyrinogen-III from 5-aminolevulinate: step 2/4. Functionally, tetrapolymerization of the monopyrrole PBG into the hydroxymethylbilane pre-uroporphyrinogen in several discrete steps. In Neisseria meningitidis serogroup B (strain ATCC BAA-335 / MC58), this protein is Porphobilinogen deaminase (hemC).